The following is a 473-amino-acid chain: Spliceosome-associated protein CWC27 homolog (473 aa).

Position 2 is an N-acetylserine (S2). The PPIase cyclophilin-type domain maps to 11–166; it reads TNGKVLLKTT…NPHKIKSCEV (156 aa). Basic and acidic residues predominate over residues 177 to 193; it reads REIKRPKKEKPEEEVKK. Disordered regions lie at residues 177–386 and 399–473; these read REIK…EDQT and QAIA…KERR. The stretch at 206–230 forms a coiled coil; the sequence is SFGEEAEEEEEEVNRVSQSMKGKSK. Residues 231–241 are compositionally biased toward basic and acidic residues; it reads SSHDLLKDDPH. Positions 257–275 are enriched in acidic residues; sequence GDLDDDGEDESAEYDEYVD. Composition is skewed to basic and acidic residues over residues 276-287, 305-348, and 360-372; these read GDEKNLMRERIA, EVEK…KRSE, and EYRR…EALR. The stretch at 307–378 forms a coiled coil; the sequence is EKKSVSRSEE…EALRKQQSKK (72 aa). Position 347 is a phosphoserine (S347). Acidic residues predominate over residues 405 to 419; that stretch reads PENDIPETEVEDDEG. Basic and acidic residues-rich tracts occupy residues 426–438 and 458–473; these read QFED…KDAS and RREE…KERR.

This sequence belongs to the cyclophilin-type PPIase family. In terms of assembly, part of the activated spliceosome B/catalytic step 1 spliceosome, one of the forms of the spliceosome which has a well-formed active site but still cannot catalyze the branching reaction and is composed at least of 52 proteins, the U2, U5 and U6 snRNAs and the pre-mRNA. Recruited during early steps of activated spliceosome B maturation, it is probably one of the first proteins released from this complex as he matures to the spliceosome C complex. Component of the minor spliceosome, which splices U12-type introns.

The protein localises to the nucleus. Functionally, as part of the spliceosome, plays a role in pre-mRNA splicing. Probable inactive PPIase with no peptidyl-prolyl cis-trans isomerase activity. As a component of the minor spliceosome, involved in the splicing of U12-type introns in pre-mRNAs. The sequence is that of Spliceosome-associated protein CWC27 homolog from Macaca fascicularis (Crab-eating macaque).